A 349-amino-acid chain; its full sequence is MAAIASTLSLSSTKPQRLFDSSFHGSAISAAPISIGLKPRSFSVRATTAGYDLNAFTFDPIKESIVSREMTRRYMTDMITYAETDVVVVGAGSAGLSAAYEISKNPNVQVAIIEQSVSPGGGAWLGGQLFSAMIVRKPAHLFLDEIGVAYDEQDTYVVVKHAALFTSTIMSKLLARPNVKLFNAVAAEDLIVKGNRVGGVVTNWALVAQNHHTQSCMDPNVMEAKIVVSSCGHDGPFGATGVKRLKSIGMIDHVPGMKALDMNTAEDAIVRLTREVVPGMIVTGMEVAEIDGAPRMGPTFGAMMISGQKAGQLALKALGLPNAIDGTLVGNLSPELVLAAADSAETVDA.

The N-terminal 45 residues, 1–45, are a transit peptide targeting the chloroplast; the sequence is MAAIASTLSLSSTKPQRLFDSSFHGSAISAAPISIGLKPRSFSVR. Substrate-binding positions include A94, 114–115, G122, and A187; that span reads EQ. 2,3-didehydroalanine (Cys) is present on C216. Substrate is bound by residues D218, H233, M285, and 295 to 297; that span reads RMG.

Belongs to the THI4 family. As to quaternary structure, homooctamer. Interacts with RBCX1 and RBCX1. Interacts with CPK33. Requires Fe cation as cofactor. Post-translationally, during the catalytic reaction, a sulfide is transferred from Cys-216 to a reaction intermediate, generating a dehydroalanine residue. Not phosphorylated in vitro by CPK33. In terms of tissue distribution, expressed at high levels in chloroplast-containing parenchymatic cells of leaves, inflorescence shoots and flowers, and at lower levels in the vascular system. In young plants, detected in roots and shoots including cotyledons, leaves and hypocotyls. Also observed in apical meristematic regions, siliques and embryos. Low expression in roots, limited to the vascular tissue. Broadly expressed in roots, cotyledons, leaves, hypocotyls, inflorescences, siliques, and strongly in guard cells.

The protein localises to the plastid. Its subcellular location is the chloroplast. It localises to the mitochondrion. It is found in the cell membrane. It catalyses the reaction [ADP-thiazole synthase]-L-cysteine + glycine + NAD(+) = [ADP-thiazole synthase]-dehydroalanine + ADP-5-ethyl-4-methylthiazole-2-carboxylate + nicotinamide + 3 H2O + 2 H(+). Functionally, involved in biosynthesis of the thiamine precursor thiazole. Catalyzes the conversion of NAD and glycine to adenosine diphosphate 5-(2-hydroxyethyl)-4-methylthiazole-2-carboxylic acid (ADT), an adenylated thiazole intermediate. The reaction includes an iron-dependent sulfide transfer from a conserved cysteine residue of the protein to a thiazole intermediate. The enzyme can only undergo a single turnover, which suggests it is a suicide enzyme. May have additional roles in adaptation to various stress conditions and in DNA damage tolerance. Acts as a positive regulator for the abscisic acid-induced activation of slow type anion channels during stomatal closure by repressing CPK33 kinase activity. The polypeptide is Thiamine thiazole synthase, chloroplastic (Arabidopsis thaliana (Mouse-ear cress)).